The primary structure comprises 315 residues: MIIVAVLLSFLAHLLVQASQPWKALDAEQALYVYKRCYEDHLPSGSDRKTYMTLWNAWRLEPNDAITHCYAKCVLTGLQIYDPQENAFKSDRIPVQYQAYKTITQSKQKEVTEYQKALAAANAKSGSCVDLYNAYLPVHNRFVNLSRQLYHGTVEGAAKIYAAMPEIKQKGESFHAYCEKRAWKGNKQSEWKNGRRYKLTGSPELKDAIDCIFRGLRYMDDTGLKVDEIVRDFNLINKSELEPEVRSVLASCKGSEAYDYYVCLVNSRLKQHFKNAFDFHELRSADYAYLLRGKVYENPEKVKEEMKKLNTTVHF.

Positions 1-18 are cleaved as a signal peptide; sequence MIIVAVLLSFLAHLLVQA. 2 disulfide bridges follow: cysteine 37–cysteine 73 and cysteine 69–cysteine 128. Tryptophan 55 contributes to the thromboxane A2 binding site. Tryptophan 58 contributes to the leukotriene C4 binding site. Thromboxane A2 is bound at residue tyrosine 70. Glycine 152 and lysine 170 together coordinate leukotriene C4. Lysine 170 is a thromboxane A2 binding site. 2 cysteine pairs are disulfide-bonded: cysteine 178–cysteine 211 and cysteine 252–cysteine 263.

This sequence belongs to the PBP/GOBP family. As to expression, distal-lateral and median lobes of female salivary gland (at protein level). Not detected in male salivary gland (at protein level). Expressed in female salivary gland. Not detected in female carcass without salivary glands. Expressed in male salivary gland and other tissues.

The protein resides in the secreted. Modulates blood feeding of female mosquitoes on vertebrate species by binding and sequestering different mediators involved in the host response. Binds leukotriene C4, leukotriene D4, leukotriene E4 and stable analogs of thromboxane A2, U-46619 and carbocyclic TXA2. Binds weakly prostaglandins: PGD2, PGE2 and PGF2alpha. Does not bind leukotriene B4, biogenic amines, ADP, platelet activating phospholipid derivative PAF and arachidonic acid. Inhibits agonist-induced smooth muscle contraction. Inhibits platelet aggregation induced by low concentrations of collagen in thromboxane A2-dependent manner. In Anopheles stephensi (Indo-Pakistan malaria mosquito), this protein is Long form salivary protein D7L1.